A 306-amino-acid chain; its full sequence is Putative lipid kinase Sca_1050 (306 aa).

The DAGKc domain maps to 3-139 (QHFHRGILFY…FDVLKVNDTY (137 aa)). Residues serine 44, 74–80 (GDGTVNE), and threonine 101 contribute to the ATP site. Serine 220, aspartate 223, and glutamate 225 together coordinate Mg(2+). Glutamate 281 acts as the Proton acceptor in catalysis.

The protein belongs to the diacylglycerol/lipid kinase family. The cofactor is Mg(2+).

Functionally, may catalyze the ATP-dependent phosphorylation of lipids other than diacylglycerol (DAG). The protein is Putative lipid kinase Sca_1050 of Staphylococcus carnosus (strain TM300).